A 1567-amino-acid polypeptide reads, in one-letter code: Transmembrane protein 131 homolog (1567 aa).

Positions 1–32 (MPTQVQMRPLLRIFAEPILLILIFLFTLGAKG) are cleaved as a signal peptide. The Lumenal segment spans residues 33–1049 (EKVLQETFLG…RPGWESSLKN (1017 aa)). Residues 55–228 (RLVPSRLDFG…TLKPVIRISF (174 aa)) form a papD-L domain region. N-linked (GlcNAc...) asparagine glycans are attached at residues Asn84, Asn114, Asn168, Asn235, Asn316, Asn317, Asn342, Asn372, Asn409, Asn462, Asn563, Asn890, and Asn1013. Residues 1050–1070 (AALVVLLASFGLVLVAAVFDA) traverse the membrane as a helical segment. Residues 1071–1567 (KAIMVQQNAY…SQRNNHNHMN (497 aa)) lie on the Cytoplasmic side of the membrane. Residues 1096-1130 (RNIVKLQAEEAAAKAESVQQQQKVKNGQLKELRKR) are a coiled coil. Disordered stretches follow at residues 1112–1337 (SVQQ…SPDA), 1364–1386 (PTDNGFDWNHATSSSDLGPIGDN), and 1502–1567 (PGLE…NHMN). Composition is skewed to low complexity over residues 1132–1150 (VVNSTNSKSKSKSSWSPWS) and 1166–1183 (KTVVSTPVTPPAASAPAA). Ser1201 and Ser1258 each carry phosphoserine. The segment covering 1247–1259 (AKSSPPQQENISP) has biased composition (polar residues). Basic and acidic residues predominate over residues 1284 to 1298 (PGRERERERRSKDQK). A compositionally biased stretch (polar residues) spans 1319 to 1331 (KLNFGQTTNSTSP). 2 stretches are compositionally biased toward polar residues: residues 1507–1519 (SARQTHNLAQEQV) and 1536–1561 (LPTQYDPFTSPSSIWSDTWRQSSQRN).

Belongs to the TMEM131 family. As to quaternary structure, may interact (via PapD-L domain) with collagen proteins (via C-terminus); the interaction is direct and is involved in assembly and TRAPPIII ER-to-Golgi transport complex-dependent secretion of collagen.

It localises to the membrane. Its function is as follows. Collagen binding transmembrane protein involved in collagen secretion, probably by recruiting the ER-to-Golgi transport complex TRAPPIII. The polypeptide is Transmembrane protein 131 homolog (Drosophila melanogaster (Fruit fly)).